The chain runs to 395 residues: uncharacterized protein (395 aa).

Transmembrane regions (helical) follow at residues 42 to 62 (LKYV…LIFI), 67 to 87 (LYSF…FVLL), 97 to 117 (LIFN…LIIF), 128 to 148 (ILST…SIIP), 196 to 216 (FIYA…LYIL), 241 to 261 (ILFY…SFVA), and 281 to 301 (LFFS…GTVV).

The protein resides in the cell membrane. This is an uncharacterized protein from Mycoplasma genitalium (strain ATCC 33530 / DSM 19775 / NCTC 10195 / G37) (Mycoplasmoides genitalium).